The chain runs to 249 residues: Aspartate/glutamate leucyltransferase (249 aa).

It belongs to the R-transferase family. Bpt subfamily.

Its subcellular location is the cytoplasm. It catalyses the reaction N-terminal L-glutamyl-[protein] + L-leucyl-tRNA(Leu) = N-terminal L-leucyl-L-glutamyl-[protein] + tRNA(Leu) + H(+). The catalysed reaction is N-terminal L-aspartyl-[protein] + L-leucyl-tRNA(Leu) = N-terminal L-leucyl-L-aspartyl-[protein] + tRNA(Leu) + H(+). Functionally, functions in the N-end rule pathway of protein degradation where it conjugates Leu from its aminoacyl-tRNA to the N-termini of proteins containing an N-terminal aspartate or glutamate. The chain is Aspartate/glutamate leucyltransferase from Brucella anthropi (strain ATCC 49188 / DSM 6882 / CCUG 24695 / JCM 21032 / LMG 3331 / NBRC 15819 / NCTC 12168 / Alc 37) (Ochrobactrum anthropi).